The sequence spans 1085 residues: Error-prone DNA polymerase 2 (1085 aa).

Residues 1040–1066 are disordered; it reads AGRGDEFAHGGGGPDSRDRQKPVVPRD.

The protein belongs to the DNA polymerase type-C family. DnaE2 subfamily.

The protein resides in the cytoplasm. It catalyses the reaction DNA(n) + a 2'-deoxyribonucleoside 5'-triphosphate = DNA(n+1) + diphosphate. Functionally, DNA polymerase involved in damage-induced mutagenesis and translesion synthesis (TLS). It is not the major replicative DNA polymerase. The protein is Error-prone DNA polymerase 2 of Agrobacterium fabrum (strain C58 / ATCC 33970) (Agrobacterium tumefaciens (strain C58)).